The primary structure comprises 305 residues: Ornithine carbamoyltransferase, anabolic (305 aa).

Carbamoyl phosphate is bound by residues 53 to 56 (STRT), Gln80, Arg104, and 131 to 134 (HPCQ). L-ornithine contacts are provided by residues Asn162, Asp219, and 223-224 (SM). Carbamoyl phosphate-binding positions include 259 to 260 (CL) and Arg287.

Belongs to the aspartate/ornithine carbamoyltransferase superfamily. OTCase family. Homotrimer.

It localises to the cytoplasm. It catalyses the reaction carbamoyl phosphate + L-ornithine = L-citrulline + phosphate + H(+). It functions in the pathway amino-acid biosynthesis; L-arginine biosynthesis; L-arginine from L-ornithine and carbamoyl phosphate: step 1/3. In terms of biological role, reversibly catalyzes the transfer of the carbamoyl group from carbamoyl phosphate (CP) to the N(epsilon) atom of ornithine (ORN) to produce L-citrulline, which is a substrate for argininosuccinate synthetase (ArgG) involved in the final step in arginine biosynthesis. In Pseudomonas aeruginosa (strain ATCC 15692 / DSM 22644 / CIP 104116 / JCM 14847 / LMG 12228 / 1C / PRS 101 / PAO1), this protein is Ornithine carbamoyltransferase, anabolic.